A 222-amino-acid chain; its full sequence is MESTLELTKIKEVLQKNLKILIILPLLFLIISAIVTFFVLSPKYQANTQILVNQTKGDNPQFMAQEVQSNIQLVNTYKEIVKSPRILDEVSKDLNDKYSPSKLSSMLTITNQENTQLINIQVKSGHKQDSEKIANSFAKVTSKQIPKIMSVDNVSILSKADGTAVKVAPKTVVNLIGAFFLGLVVALIYIFFKVIFDKRIKDEEDVEKELGLPVLGSIQKFN.

2 helical membrane-spanning segments follow: residues 20 to 40 (ILIILPLLFLIISAIVTFFVL) and 172 to 192 (VVNLIGAFFLGLVVALIYIFF).

This sequence belongs to the CpsC/CapA family.

The protein localises to the cell membrane. Its function is as follows. Required for the biosynthesis of type 5 capsular polysaccharide (Cap5/CP5). Might act as the chain-length regulator. The protein is Capsular polysaccharide type 5 biosynthesis protein cap5A (cap5A) of Staphylococcus aureus (strain Newman).